A 210-amino-acid chain; its full sequence is MAMAGVFVLFSFVLCGFLPDAAFGAEVDCSRFPNATDKEGKDVLVCNKDLRPICGTDGVTYTNDCLLCAYSIEFGTNISKEHDGECKETVPMNCSSYANTTSEDGKVMVLCNRAFNPVCGTDGVTYDNECLLCAHKVEQGASVDKRHDGGCRKELAAVSVDCSEYPKPDCTAEDRPLCGSDNKTYGNKCNFCNAVVESNGTLTLSHFGKC.

A signal peptide spans 1–24; the sequence is MAMAGVFVLFSFVLCGFLPDAAFG. 3 consecutive Kazal-like domains span residues 25–88, 89–153, and 156–210; these read AEVD…ECKE, TVPM…GCRK, and AAVS…FGKC. 3 disulfides stabilise this stretch: Cys-29-Cys-68, Cys-46-Cys-65, and Cys-54-Cys-86. Asn-34 carries an N-linked (GlcNAc...) asparagine glycan. 3 N-linked (GlcNAc...) asparagine glycosylation sites follow: Asn-77, Asn-93, and Asn-99. Cystine bridges form between Cys-94–Cys-133, Cys-111–Cys-130, Cys-119–Cys-151, Cys-162–Cys-192, Cys-170–Cys-189, and Cys-178–Cys-210. N-linked (GlcNAc...) asparagine; partial glycosylation occurs at Asn-199.

The protein localises to the secreted. Functionally, serine protease inhibitor. Inhibits trypsin. This chain is Ovomucoid, found in Gallus gallus (Chicken).